The following is a 398-amino-acid chain: L-talarate/galactarate dehydratase (398 aa).

Residues 46 to 48 (DAK), 82 to 83 (KR), and K195 each bind substrate. The Proton acceptor role is filled by K197. Position 226 (D226) interacts with Mg(2+). Substrate is bound at residue N228. The Mg(2+) site is built by E252 and E278. Residue H328 is the Proton donor/acceptor of the active site. E348 contacts substrate.

The protein belongs to the mandelate racemase/muconate lactonizing enzyme family. In terms of assembly, homooctamer; tetramer of dimers. Mg(2+) is required as a cofactor.

It catalyses the reaction L-altrarate = 5-dehydro-4-deoxy-D-glucarate + H2O. The enzyme catalyses galactarate = 5-dehydro-4-deoxy-D-glucarate + H2O. The catalysed reaction is L-altrarate = galactarate. With respect to regulation, competitively inhibited by tartronate. Catalyzes the efficient dehydration of both L-talarate (also called L-altrarate) and galactarate to 5-keto-4-deoxy-D-glucarate (5-KDG). Also catalyzes the epimerization of L-talarate to galactarate; epimerization occurs in competition with dehydration. Is required for the utilization of L-talarate as a carbon source. Also functions in galactarate utilization. Is not active on other acid sugars. This chain is L-talarate/galactarate dehydratase, found in Salmonella typhimurium (strain LT2 / SGSC1412 / ATCC 700720).